The chain runs to 198 residues: Carnitine operon protein CaiE (198 aa).

Residues 174-198 form a disordered region; that stretch reads KPLTQAEENRPRLKGTTDVKPKSAQ. Over residues 180–198 the composition is skewed to basic and acidic residues; it reads EENRPRLKGTTDVKPKSAQ.

This sequence belongs to the transferase hexapeptide repeat family.

Its pathway is amine and polyamine metabolism; carnitine metabolism. Overproduction of CaiE stimulates the activity of CaiB and CaiD. In Salmonella typhimurium (strain LT2 / SGSC1412 / ATCC 700720), this protein is Carnitine operon protein CaiE.